Consider the following 174-residue polypeptide: Non-classical export protein 2 homolog 1 (174 aa).

Topologically, residues 1–7 (MLSAADN) are cytoplasmic. Residues 8 to 28 (LVRIINAVFLIISIGLISGLI) traverse the membrane as a helical segment. Over 29–41 (GTQTKHSSRVNFC) the chain is Extracellular. The chain crosses the membrane as a helical span at residues 42 to 62 (MFAAVYGLVTDSLYGFLANFW). At 63–69 (TSLTYPA) the chain is on the cytoplasmic side. Residues 70–90 (ILLVLDFLNFIFTFVAATALA) traverse the membrane as a helical segment. Residues 91 to 122 (VGIRCHSCKNKTYLEQNKIIQGSSSRCHQSQA) are Extracellular-facing. A helical membrane pass occupies residues 123–143 (AVAFFYFSCFLFLIKVTVATM). Residues 144–174 (GMMQNGGFGSNTGFSRRRARRQMGIPTISQV) are Cytoplasmic-facing.

It belongs to the NCE102 family.

It localises to the cell membrane. Functionally, involved in membrane organization. Required for the formation of membrane compartments of CAN1 (MCCs), localization of CAN1 at the MCCs and subsequent invagination of the plasma membrane at the MCCs sites. Involved in eisosome organization and might act as a sensor of sphingolipids that regulates plasma membrane function. Involved in a novel pathway of export of proteins that lack a cleavable signal sequence. Non-classical export pathway also functions as an alternative clearance/detoxification pathway to eliminate damaged material, when the basic repair pathway is not sufficient. The chain is Non-classical export protein 2 homolog 1 (FHN1) from Saccharomyces cerevisiae (strain ATCC 204508 / S288c) (Baker's yeast).